The primary structure comprises 137 residues: Probable 4-amino-4-deoxy-L-arabinose-phosphoundecaprenol flippase subunit ArnF (137 aa).

The Cytoplasmic portion of the chain corresponds to 1–5 (MSRAR). The helical transmembrane segment at 6–26 (GFAFALGSVALVSGAQLGMRW) threads the bilayer. Residues 27-49 (SMTRLPAPDQWLPALSAGSVDLA) are Periplasmic-facing. The helical transmembrane segment at 50–70 (ALAVVAAAIAAYALSMLCWLL) threads the bilayer. Residues 71–80 (ALRDLPLGRA) lie on the Cytoplasmic side of the membrane. The helical transmembrane segment at 81-101 (YSLLSISYALVYLLAASLPLF) threads the bilayer. A topological domain (periplasmic) is located at residue Asn-102. The helical transmembrane segment at 103–123 (EPFTLSKTLGVALVILGVITI) threads the bilayer. Residues 124-137 (NSRSAPATSPRNTP) lie on the Cytoplasmic side of the membrane.

Belongs to the ArnF family. Heterodimer of ArnE and ArnF.

It is found in the cell inner membrane. It participates in bacterial outer membrane biogenesis; lipopolysaccharide biosynthesis. Its function is as follows. Translocates 4-amino-4-deoxy-L-arabinose-phosphoundecaprenol (alpha-L-Ara4N-phosphoundecaprenol) from the cytoplasmic to the periplasmic side of the inner membrane. This chain is Probable 4-amino-4-deoxy-L-arabinose-phosphoundecaprenol flippase subunit ArnF, found in Pseudomonas fluorescens (strain ATCC BAA-477 / NRRL B-23932 / Pf-5).